A 95-amino-acid chain; its full sequence is Large ribosomal subunit protein eL37x (95 aa).

Zn(2+) contacts are provided by Cys-19, Cys-22, Cys-34, and Cys-37. Residues 19-37 (CVRCGRRSFHIQKSRCSAC) form a C4-type zinc finger. Positions 73-95 (RFKTGFREGTEAKPRSKASASSA) are disordered. The segment covering 77–86 (GFREGTEAKP) has biased composition (basic and acidic residues).

It belongs to the eukaryotic ribosomal protein eL37 family. Requires Zn(2+) as cofactor.

In terms of biological role, binds to the 23S rRNA. This chain is Large ribosomal subunit protein eL37x (RPL37C), found in Arabidopsis thaliana (Mouse-ear cress).